A 169-amino-acid chain; its full sequence is Ion-translocating oxidoreductase complex subunit B (169 aa).

The tract at residues 1–23 (MIISIIIFSILSFILGVIVSLVS) is hydrophobic. The 4Fe-4S domain maps to 30–89 (SNLSLINDIDELLPQMQCAQCGYPGCYAYSQAIVDGNENIYKCIPGGKEVVLKLENLLNK). Residues C47, C50, C55, C72, C116, C119, C122, C126, C146, C149, C152, and C156 each coordinate [4Fe-4S] cluster. 2 4Fe-4S ferredoxin-type domains span residues 107 to 136 (SIVEIDENNCVGCSKCRLVCPVDAVVGTYN) and 137 to 166 (FRHTVLIDSCTGCNLCIPLCPTNCIKKKIM).

This sequence belongs to the 4Fe4S bacterial-type ferredoxin family. RnfB subfamily. As to quaternary structure, the complex is composed of six subunits: RnfA, RnfB, RnfC, RnfD, RnfE and RnfG. It depends on [4Fe-4S] cluster as a cofactor.

The protein resides in the cell inner membrane. Part of a membrane-bound complex that couples electron transfer with translocation of ions across the membrane. The sequence is that of Ion-translocating oxidoreductase complex subunit B from Buchnera aphidicola subsp. Baizongia pistaciae (strain Bp).